Here is a 648-residue protein sequence, read N- to C-terminus: DNA ligase (648 aa).

NAD(+) is bound by residues 63-67 and 105-106; these read DILYD and ST. The active-site N6-AMP-lysine intermediate is the Lys143. NAD(+)-binding residues include Arg159, Glu190, and Lys302. The Zn(2+) site is built by Cys390, Cys393, Cys406, and Cys412. Residues 570-648 form the BRCT domain; sequence SLASPLTGKI…SEQEYLDLIS (79 aa).

This sequence belongs to the NAD-dependent DNA ligase family. LigA subfamily. Mg(2+) serves as cofactor. Mn(2+) is required as a cofactor.

The enzyme catalyses NAD(+) + (deoxyribonucleotide)n-3'-hydroxyl + 5'-phospho-(deoxyribonucleotide)m = (deoxyribonucleotide)n+m + AMP + beta-nicotinamide D-nucleotide.. Functionally, DNA ligase that catalyzes the formation of phosphodiester linkages between 5'-phosphoryl and 3'-hydroxyl groups in double-stranded DNA using NAD as a coenzyme and as the energy source for the reaction. It is essential for DNA replication and repair of damaged DNA. This chain is DNA ligase, found in Shewanella baltica (strain OS155 / ATCC BAA-1091).